Consider the following 511-residue polypeptide: MDNYEGSDPWNTSSNAWTKDDDHVVSTTNSEPSLNGISGEFNTLNFSTPLDTNEEDTGFLPTNDVLEESIWDDSRNPLGATGMSQTPNIAANETVIDKNDARDQNIEESEADLLDWTNNVRKTYRPLDADIIIIEEIPEREGLLFKHANYLVKHLIALPSTSPSEERTVVRRYSDFLWLREILLKRYPFRMIPELPPKRIGSQNADQLFLKKRRIGLSRFINLVMKHPKLSNDDLVLTFLTVRTDLTSWRKQATYDTSNEFADKKISQEFMKMWKKEFAEQWNQAASCIDTSMELWYRITLLLERHEKRIMQMVHERNFFETLVDNFSEVTPKLYPVQQNDTILDINNNLSIIKKHLETTSSICKQETEEISGTLSPKFKIFTDILLSLRSLFERYKIMAANNVVELQRHVELNKEKLESMKGKPDVSGAEYDRIKKIIQKDRRSIIEQSNRAWLIRQCILEEFTIFQETQFLITRAFQDWAKLNSNHAGLKLNEWEKLVTSIMDMPISRE.

Residues 1–36 (MDNYEGSDPWNTSSNAWTKDDDHVVSTTNSEPSLNG) are disordered. Residues 25–36 (VSTTNSEPSLNG) show a composition bias toward polar residues. In terms of domain architecture, PX spans 128–247 (DADIIIIEEI…TFLTVRTDLT (120 aa)). A 1,2-diacyl-sn-glycero-3-phospho-(1D-myo-inositol-3-phosphate) contacts are provided by Arg-172, Ser-174, Lys-198, and Arg-213.

This sequence belongs to the sorting nexin family. In terms of assembly, homodimer. Forms an autoinhibited tetramer consisting of 2 homodimers that self-interact, wherein the membrane-interacting BAR surfaces are sequestered and the PX lipid-binding sites are occluded. Interacts with VPS1.

The protein resides in the cytoplasm. Its subcellular location is the endosome membrane. Its function is as follows. Required for vacuolar protein sorting. Component of the retromer-mediated endosome-to-Golgi retrograde pathway. Required for efficient cargo export from the endosome, promoting VPS1-mediated fission of retromer-coated tubules that bud from the endosome. This is Sorting nexin MVP1 (MVP1) from Saccharomyces cerevisiae (strain ATCC 204508 / S288c) (Baker's yeast).